The primary structure comprises 179 residues: Large ribosomal subunit protein uL5 (179 aa).

The protein belongs to the universal ribosomal protein uL5 family. As to quaternary structure, part of the 50S ribosomal subunit; part of the 5S rRNA/L5/L18/L25 subcomplex. Contacts the 5S rRNA and the P site tRNA. Forms a bridge to the 30S subunit in the 70S ribosome.

This is one of the proteins that bind and probably mediate the attachment of the 5S RNA into the large ribosomal subunit, where it forms part of the central protuberance. In the 70S ribosome it contacts protein S13 of the 30S subunit (bridge B1b), connecting the 2 subunits; this bridge is implicated in subunit movement. Contacts the P site tRNA; the 5S rRNA and some of its associated proteins might help stabilize positioning of ribosome-bound tRNAs. In Synechococcus sp. (strain CC9605), this protein is Large ribosomal subunit protein uL5.